The following is a 126-amino-acid chain: Profilin-1A (126 aa).

The actin binding stretch occupies residues 2 to 36; the sequence is SWQTYVDTNLVGTGAVTQAAILGLDGNTWATSAGF. Lys104 is subject to N6,N6,N6-trimethyllysine.

Belongs to the profilin family. In terms of assembly, occurs in many kinds of cells as a complex with monomeric actin in a 1:1 ratio.

The protein localises to the cytoplasm. Its subcellular location is the cytoskeleton. In terms of biological role, binds to actin and affects the structure of the cytoskeleton. At high concentrations, profilin prevents the polymerization of actin, whereas it enhances it at low concentrations. By binding to PIP2, it inhibits the formation of IP3 and DG. This is Profilin-1A from Acanthamoeba castellanii (Amoeba).